A 432-amino-acid polypeptide reads, in one-letter code: Glutamate-1-semialdehyde 2,1-aminomutase (432 aa).

K266 carries the post-translational modification N6-(pyridoxal phosphate)lysine.

The protein belongs to the class-III pyridoxal-phosphate-dependent aminotransferase family. HemL subfamily. As to quaternary structure, homodimer. The cofactor is pyridoxal 5'-phosphate.

The protein resides in the cytoplasm. It carries out the reaction (S)-4-amino-5-oxopentanoate = 5-aminolevulinate. It functions in the pathway porphyrin-containing compound metabolism; protoporphyrin-IX biosynthesis; 5-aminolevulinate from L-glutamyl-tRNA(Glu): step 2/2. The polypeptide is Glutamate-1-semialdehyde 2,1-aminomutase (Janthinobacterium sp. (strain Marseille) (Minibacterium massiliensis)).